The sequence spans 396 residues: MAKAKFERLKPHVNVGTIGHVDHGKTTLTAAIATVAAITSGGEAKDYASIDSAPEEKARGITINTSHVEYDTPSRHYAHVDCPGHADYVKNMITGAAQMDGAILVVSATDGPMPQTREHILLSRQVGVPYIVVFMNKCDVVDDEELLELVEMEVRELLSDYDFPGDDTPIIHGSATEALKGSQEKYGQPAVVELLNVLDTYIPEPERDIDKAFLMPIEDVFSISGRGTVVTGRVESGIVRVGDEIEIVGIRDTQKTTCTGVEMFRKLLDEGRAGENCGVLLRGTKREDVQRGQVLAKPGSITPHTKFDAEVYVLSKEEGGRHTPFLNGYRPQFYFRTTDVTGAIQLQDGTEMVMPGDNVEMGVELIHPIAMDKGLRFAIREGGRTVGAGVVANVLN.

A tr-type G domain is found at 10–206 (KPHVNVGTIG…VLDTYIPEPE (197 aa)). A G1 region spans residues 19-26 (GHVDHGKT). 19–26 (GHVDHGKT) is a GTP binding site. Residue Thr-26 participates in Mg(2+) binding. The segment at 60-64 (GITIN) is G2. The segment at 81-84 (DCPG) is G3. GTP-binding positions include 81 to 85 (DCPGH) and 136 to 139 (NKCD). Residues 136 to 139 (NKCD) form a G4 region. The segment at 174–176 (SAT) is G5.

The protein belongs to the TRAFAC class translation factor GTPase superfamily. Classic translation factor GTPase family. EF-Tu/EF-1A subfamily. In terms of assembly, monomer.

It is found in the cytoplasm. It carries out the reaction GTP + H2O = GDP + phosphate + H(+). GTP hydrolase that promotes the GTP-dependent binding of aminoacyl-tRNA to the A-site of ribosomes during protein biosynthesis. In Psychrobacter cryohalolentis (strain ATCC BAA-1226 / DSM 17306 / VKM B-2378 / K5), this protein is Elongation factor Tu.